The following is a 64-amino-acid chain: Large ribosomal subunit protein bL33 (64 aa).

The protein belongs to the bacterial ribosomal protein bL33 family.

The protein is Large ribosomal subunit protein bL33 of Nostoc punctiforme (strain ATCC 29133 / PCC 73102).